The chain runs to 191 residues: Protein Ves (191 aa).

It belongs to the Ves family.

The polypeptide is Protein Ves (Escherichia coli (strain ATCC 8739 / DSM 1576 / NBRC 3972 / NCIMB 8545 / WDCM 00012 / Crooks)).